Here is a 465-residue protein sequence, read N- to C-terminus: uncharacterized protein (465 aa).

Positions 6 to 91 (NVTLSNLIDF…LKLKREYLFR (86 aa)) constitute an RAMA domain. Disordered regions lie at residues 95 to 377 (TGKN…SNNQ) and 392 to 465 (YNQQ…KSKS). Positions 117–137 (PQQQQQQQQQQQQQQQQQQQP) are enriched in low complexity. Residues 156 to 169 (ETSDQDIDNDDDDA) are compositionally biased toward acidic residues. Over residues 177–190 (TTTTTTTTTTTTTT) the composition is skewed to low complexity. Residues 208 to 220 (PKEKKKEKKENIL) show a composition bias toward basic and acidic residues. Residues 214–242 (EKKENILTKKKQQSLQYQQQLQLLQRQNS) are a coiled coil. A compositionally biased stretch (low complexity) spans 226–263 (QSLQYQQQLQLLQRQNSPPSVSPSSSTSTSSSTSSPAS). A compositionally biased stretch (polar residues) spans 264–294 (NQIFNSFGPNSQNHNQYGINYNSQQHQPQQY). Residues 295–376 (NNNNNNNNNN…NNNINNNSNN (82 aa)) show a composition bias toward low complexity. The span at 392 to 407 (YNQQNPPKHQYPNNFL) shows a compositional bias: polar residues. Residues 424–442 (NQSQNQNQNQNQNQNQNQK) are compositionally biased toward low complexity. Basic residues predominate over residues 443-465 (SKSKSKSKSKFKSKSKSKSKSKS).

This is an uncharacterized protein from Dictyostelium discoideum (Social amoeba).